We begin with the raw amino-acid sequence, 639 residues long: Chaperone protein DnaK (639 aa).

Phosphothreonine; by autocatalysis is present on T199. A compositionally biased stretch (low complexity) spans A602–G613. The interval A602–K639 is disordered. The span at D625–K639 shows a compositional bias: acidic residues.

Belongs to the heat shock protein 70 family.

Functionally, acts as a chaperone. The polypeptide is Chaperone protein DnaK (Pseudoalteromonas atlantica (strain T6c / ATCC BAA-1087)).